The following is a 209-amino-acid chain: ATP-dependent dethiobiotin synthetase BioD (209 aa).

An ATP-binding site is contributed by 13–18 (DVGKTV). Thr-17 contacts Mg(2+). The active site involves Lys-33. Residue Glu-100 coordinates Mg(2+). Residues 100 to 103 (EGAG) and 184 to 186 (PRL) each bind ATP.

The protein belongs to the dethiobiotin synthetase family. Homodimer. Requires Mg(2+) as cofactor.

Its subcellular location is the cytoplasm. The enzyme catalyses (7R,8S)-7,8-diammoniononanoate + CO2 + ATP = (4R,5S)-dethiobiotin + ADP + phosphate + 3 H(+). The protein operates within cofactor biosynthesis; biotin biosynthesis; biotin from 7,8-diaminononanoate: step 1/2. Functionally, catalyzes a mechanistically unusual reaction, the ATP-dependent insertion of CO2 between the N7 and N8 nitrogen atoms of 7,8-diaminopelargonic acid (DAPA, also called 7,8-diammoniononanoate) to form a ureido ring. The protein is ATP-dependent dethiobiotin synthetase BioD of Rhizorhabdus wittichii (strain DSM 6014 / CCUG 31198 / JCM 15750 / NBRC 105917 / EY 4224 / RW1) (Sphingomonas wittichii).